The sequence spans 173 residues: Interferon gamma (173 aa).

Positions 1–22 are cleaved as a signal peptide; the sequence is MNATHCILALQLCLLAISGCSS. Pyrrolidone carboxylic acid is present on Gln-23. Asn-38 and Asn-105 each carry an N-linked (GlcNAc...) asparagine glycan.

The protein belongs to the type II (or gamma) interferon family. Homodimer. Interacts with IFNGR1 (via extracellular domain); this interaction promotes IFNGR1 dimerization. Released primarily from activated T lymphocytes.

Its subcellular location is the secreted. Type II interferon produced by immune cells such as T-cells and NK cells that plays crucial roles in antimicrobial, antiviral, and antitumor responses by activating effector immune cells and enhancing antigen presentation. Primarily signals through the JAK-STAT pathway after interaction with its receptor IFNGR1 to affect gene regulation. Upon IFNG binding, IFNGR1 intracellular domain opens out to allow association of downstream signaling components JAK2, JAK1 and STAT1, leading to STAT1 activation, nuclear translocation and transcription of IFNG-regulated genes. Many of the induced genes are transcription factors such as IRF1 that are able to further drive regulation of a next wave of transcription. Plays a role in class I antigen presentation pathway by inducing a replacement of catalytic proteasome subunits with immunoproteasome subunits. In turn, increases the quantity, quality, and repertoire of peptides for class I MHC loading. Increases the efficiency of peptide generation also by inducing the expression of activator PA28 that associates with the proteasome and alters its proteolytic cleavage preference. Up-regulates as well MHC II complexes on the cell surface by promoting expression of several key molecules such as cathepsins B/CTSB, H/CTSH, and L/CTSL. Participates in the regulation of hematopoietic stem cells during development and under homeostatic conditions by affecting their development, quiescence, and differentiation. This Meriones unguiculatus (Mongolian jird) protein is Interferon gamma (IFNG).